The sequence spans 255 residues: U2 small nuclear ribonucleoprotein A' (255 aa).

LRR repeat units follow at residues 20–41 (RDRELDLRGYKIPVIENLGATL), 43–64 (QFDAIDFSDNEIRKLDGFPLLR), 65–86 (RLKTLLVNNNRICRIGEGLDQA), and 89–110 (CLTELILTNNSLVELGDLDPLA). The LRRCT domain occupies 123–161 (NPVTNKKHYRLYVIYKVPQVRVLDFQKVKLKERQEAEKM). Lys172 carries the post-translational modification N6-acetyllysine; alternate. Lys172 participates in a covalent cross-link: Glycyl lysine isopeptide (Lys-Gly) (interchain with G-Cter in SUMO2); alternate. Residues Ser178 and Ser197 each carry the phosphoserine modification. A disordered region spans residues 179-199 (KTFNPGAGLPTDKKKGGPSAG). Lys221 is covalently cross-linked (Glycyl lysine isopeptide (Lys-Gly) (interchain with G-Cter in SUMO2)). Residues 222-255 (GLLQSGQIPGRERRSGPSDEGEEEIEDDTVTNGS) form a disordered region. A phosphoserine mark is found at Ser236 and Ser255. Residues 240–255 (DEGEEEIEDDTVTNGS) are compositionally biased toward acidic residues.

It belongs to the U2 small nuclear ribonucleoprotein A family. Identified in the spliceosome B complex. Identified in the spliceosome C complex. Found in a pre-mRNA splicing complex with SFRS4, SFRS5, SNRNP70, SNRPA1, SRRM1 and SRRM2. Found in a pre-mRNA exonic splicing enhancer (ESE) complex with SNRNP70, SNRPA1, SRRM1 and TRA2B. Contributes to the binding of stem loop IV of U2 snRNA with SNRPB2.

It is found in the nucleus. Involved in pre-mRNA splicing as component of the spliceosome. Associated with sn-RNP U2, where it contributes to the binding of stem loop IV of U2 snRNA. This Mus musculus (Mouse) protein is U2 small nuclear ribonucleoprotein A' (Snrpa1).